The sequence spans 218 residues: Ras-related protein Rab-11B (218 aa).

Gly2 carries the N-acetylglycine modification. Ser20, Gly21, Gly23, Lys24, Ser25, Asn26, Asn37, Leu38, Ser40, Ser42, and Thr43 together coordinate GTP. Ser25 contributes to the Mg(2+) binding site. Positions 36–47 match the Switch 1 motif; that stretch reads FNLESKSTIGVE. Mg(2+) contacts are provided by Thr43 and Asp66. The Switch 2 motif lies at 67–86; the sequence is TAGQERYRAITSAYYRGAVG. Gly69, Asn124, Lys125, Asp127, Ala155, and Leu156 together coordinate GTP. Residues 183–218 form a disordered region; sequence DRSAHDESPGNNVVDISVPPTTDGQKSNKLQCCQNM. Residues 201–218 are compositionally biased toward polar residues; it reads PPTTDGQKSNKLQCCQNM. S-geranylgeranyl cysteine attachment occurs at residues Cys214 and Cys215. At Cys215 the chain carries Cysteine methyl ester. The propeptide at 216–218 is removed in mature form; that stretch reads QNM.

It belongs to the small GTPase superfamily. Rab family. Requires Mg(2+) as cofactor.

The protein resides in the recycling endosome membrane. It localises to the cytoplasmic vesicle. Its subcellular location is the secretory vesicle. The protein localises to the synaptic vesicle membrane. It is found in the phagosome membrane. It carries out the reaction GTP + H2O = GDP + phosphate + H(+). Its activity is regulated as follows. Regulated by guanine nucleotide exchange factors (GEFs) which promote the exchange of bound GDP for free GTP. Regulated by GTPase activating proteins (GAPs) which increase the GTP hydrolysis activity. Inhibited by GDP dissociation inhibitors (GDIs) which prevent Rab-GDP dissociation. Functionally, the small GTPases Rab are key regulators of intracellular membrane trafficking, from the formation of transport vesicles to their fusion with membranes. Rabs cycle between an inactive GDP-bound form and an active GTP-bound form that is able to recruit to membranes different set of downstream effectors directly responsible for vesicle formation, movement, tethering and fusion. That Rab plays a role in endocytic recycling, regulating apical recycling of several transmembrane proteins including cystic fibrosis transmembrane conductance regulator/CFTR, epithelial sodium channel/ENaC, potassium voltage-gated channel, and voltage-dependent L-type calcium channel. May also regulate constitutive and regulated secretion, like insulin granule exocytosis. Required for melanosome transport and release from melanocytes. Also regulates V-ATPase intracellular transport in response to extracellular acidosis. In Diplobatis ommata (Ocellated electric ray), this protein is Ras-related protein Rab-11B.